Consider the following 229-residue polypeptide: uncharacterized protein (229 aa).

The interval M1–R102 is disordered. Residues A73 to A94 show a composition bias toward basic residues. A run of 2 helical transmembrane segments spans residues L137–L157 and L159–L179.

The protein resides in the cell membrane. This is an uncharacterized protein from Mycobacterium leprae (strain TN).